The chain runs to 438 residues: MEVAPSDVDLRTSRRFYERAQHSIPGGVNSPARAFDSVGGTPLFIERAEGAYLEDADANEYLDYVGSWGPMIFGHAHPDVVEAVKDQAEASTSFGAPTEIEIEVADLVCDLVPSVEKVRMVNSGTEATMSAARLARGYTGRDKIIKFEGNYHGHGDFFLISAGSGAMTLGKPDSPGVTDGNAKDTLLAQYNDLSHVQRLVEANQGEVACIIVEPIAGNMGCIPPEPGFLEGLRELCDAHDIVLVFDEVMTGFRVAPGGAQERYGVIPDLTCLGKIIGGGLPVGAYGGKQEIMDYVAPTGPVYQAGTLSGNPLAMRAGHAILSKIAEEKDRIYDQLEDYAEALQKGTEHNLDALGLDYTTHQVGAMGSLFFTDAEVVDQDTAQTADTEAYAAYFHAMLEEGIYLPPSQFEAVFYGTCHGEDELETTLETQRRALKRVHS.

Lys-274 is subject to N6-(pyridoxal phosphate)lysine.

It belongs to the class-III pyridoxal-phosphate-dependent aminotransferase family. HemL subfamily. As to quaternary structure, homodimer. Pyridoxal 5'-phosphate serves as cofactor.

It localises to the cytoplasm. It carries out the reaction (S)-4-amino-5-oxopentanoate = 5-aminolevulinate. The protein operates within porphyrin-containing compound metabolism; protoporphyrin-IX biosynthesis; 5-aminolevulinate from L-glutamyl-tRNA(Glu): step 2/2. The polypeptide is Glutamate-1-semialdehyde 2,1-aminomutase (Salinibacter ruber (strain DSM 13855 / M31)).